Consider the following 212-residue polypeptide: Adenylate kinase (212 aa).

10 to 15 (GAGKGT) is a binding site for ATP. An NMP region spans residues 30–59 (STGDILREAMAQETELGQKAKSYIDAGELV). AMP is bound by residues threonine 31, arginine 36, 57–59 (ELV), 84–87 (GYPR), and glutamine 91. The segment at 125–158 (RRRVHEETGETYHLDHDPPPEDVDPDLIVQRSDD) is LID. ATP contacts are provided by residues arginine 126 and 135-136 (TY). Positions 155 and 166 each coordinate AMP. Glycine 194 lines the ATP pocket.

Belongs to the adenylate kinase family. In terms of assembly, monomer.

It is found in the cytoplasm. It catalyses the reaction AMP + ATP = 2 ADP. The protein operates within purine metabolism; AMP biosynthesis via salvage pathway; AMP from ADP: step 1/1. Functionally, catalyzes the reversible transfer of the terminal phosphate group between ATP and AMP. Plays an important role in cellular energy homeostasis and in adenine nucleotide metabolism. The polypeptide is Adenylate kinase (Salinibacter ruber (strain DSM 13855 / M31)).